A 390-amino-acid chain; its full sequence is DNA polymerase IV (390 aa).

The 182-residue stretch at 6 to 187 (VMHVDLDAFF…LDIAVMPGIG (182 aa)) folds into the UmuC domain. The Mg(2+) site is built by D10 and D105. E106 is an active-site residue.

The protein belongs to the DNA polymerase type-Y family. As to quaternary structure, monomer. It depends on Mg(2+) as a cofactor.

It localises to the cytoplasm. It carries out the reaction DNA(n) + a 2'-deoxyribonucleoside 5'-triphosphate = DNA(n+1) + diphosphate. Poorly processive, error-prone DNA polymerase involved in untargeted mutagenesis. Copies undamaged DNA at stalled replication forks, which arise in vivo from mismatched or misaligned primer ends. These misaligned primers can be extended by PolIV. Exhibits no 3'-5' exonuclease (proofreading) activity. May be involved in translesional synthesis, in conjunction with the beta clamp from PolIII. This chain is DNA polymerase IV, found in Dehalococcoides mccartyi (strain ATCC BAA-2100 / JCM 16839 / KCTC 5957 / BAV1).